Consider the following 282-residue polypeptide: Protein DOG1-like 3 (282 aa).

Residues 11 to 254 (EQLQKGCYYE…HEWGRVREEQ (244 aa)) form the DOG1 domain.

In Arabidopsis thaliana (Mouse-ear cress), this protein is Protein DOG1-like 3.